Consider the following 239-residue polypeptide: Putative ABC transporter ATP-binding protein BR1368/BS1330_I1363 (239 aa).

An ABC transporter domain is found at 5–234 (LSLDRVSVSR…EQVHLHYVEA (230 aa)). Position 37-44 (37-44 (GDNGVGKT)) interacts with ATP.

The protein belongs to the ABC transporter superfamily.

The protein localises to the cell inner membrane. Probably part of an ABC transporter complex. Responsible for energy coupling to the transport system. This Brucella suis biovar 1 (strain 1330) protein is Putative ABC transporter ATP-binding protein BR1368/BS1330_I1363.